A 429-amino-acid chain; its full sequence is 3-phosphoshikimate 1-carboxyvinyltransferase (429 aa).

Residues Lys11, Ser12, and Arg16 each contribute to the 3-phosphoshikimate site. Lys11 is a phosphoenolpyruvate binding site. Residues Gly82 and Arg110 each contribute to the phosphoenolpyruvate site. Residues Ser155, Gln157, Asp302, and Lys329 each coordinate 3-phosphoshikimate. Phosphoenolpyruvate is bound at residue Gln157. The active-site Proton acceptor is the Asp302. Arg333 and Arg385 together coordinate phosphoenolpyruvate.

The protein belongs to the EPSP synthase family. Monomer.

The protein localises to the cytoplasm. It catalyses the reaction 3-phosphoshikimate + phosphoenolpyruvate = 5-O-(1-carboxyvinyl)-3-phosphoshikimate + phosphate. The protein operates within metabolic intermediate biosynthesis; chorismate biosynthesis; chorismate from D-erythrose 4-phosphate and phosphoenolpyruvate: step 6/7. Its function is as follows. Catalyzes the transfer of the enolpyruvyl moiety of phosphoenolpyruvate (PEP) to the 5-hydroxyl of shikimate-3-phosphate (S3P) to produce enolpyruvyl shikimate-3-phosphate and inorganic phosphate. The protein is 3-phosphoshikimate 1-carboxyvinyltransferase of Helicobacter pylori (strain P12).